The chain runs to 544 residues: Calcium-dependent protein kinase 6 (544 aa).

Residues 1–47 form a disordered region; the sequence is MGNSCRGSFKDKIYEGNHSRPEENSKSTTTTVSSVHSPTTDQDFSKQ. Gly2 carries the N-myristoyl glycine lipid modification. Positions 8-25 are enriched in basic and acidic residues; sequence SFKDKIYEGNHSRPEENS. Low complexity predominate over residues 26 to 40; sequence KSTTTTVSSVHSPTT. The region spanning 85–343 is the Protein kinase domain; it reads YTLSRKLGQG…AHEVLRHPWI (259 aa). ATP-binding positions include 91–99 and Lys114; that span reads LGQGQFGTT. The active-site Proton acceptor is the Asp209. Ser249 bears the Phosphoserine mark. Residues 349 to 379 form an autoinhibitory domain region; that stretch reads APDRALDPAVLSRLKQFSAMNKLKKMALKVI. 4 EF-hand domains span residues 386–421, 422–457, 458–493, and 497–527; these read EEIA…YGST, LKDT…LNKL, EREE…HGMT, and LEDI…GNAG. The Ca(2+) site is built by Asp399, Asp401, Ser403, Glu410, Asp435, Asp437, Ser439, Thr441, Glu446, Asp471, Asp473, Ser475, Tyr477, Glu482, Asp505, Asp507, Asp509, Arg511, and Glu516.

The protein belongs to the protein kinase superfamily. Ser/Thr protein kinase family. CDPK subfamily. Interacts with SLAC1. Interacts with FD. In terms of tissue distribution, expressed in both guard cells and mesophyll cells. Expressed in the shoot apical meristem.

The protein localises to the cell membrane. It localises to the nucleus. The catalysed reaction is L-seryl-[protein] + ATP = O-phospho-L-seryl-[protein] + ADP + H(+). It catalyses the reaction L-threonyl-[protein] + ATP = O-phospho-L-threonyl-[protein] + ADP + H(+). Activated by calcium. Autophosphorylation may play an important role in the regulation of the kinase activity. Functionally, may play a role in signal transduction pathways that involve calcium as a second messenger. Functions in abscisic acid (ABA) regulation of guard cell S-type anion- and Ca(2+)-permeable channels and stomatal closure. Phosphorylates FD. The polypeptide is Calcium-dependent protein kinase 6 (CPK6) (Arabidopsis thaliana (Mouse-ear cress)).